Consider the following 344-residue polypeptide: Uroporphyrinogen decarboxylase (344 aa).

Substrate contacts are provided by residues 25-29 (RQAGR), D75, Y152, S207, and H323.

The protein belongs to the uroporphyrinogen decarboxylase family. As to quaternary structure, homodimer.

Its subcellular location is the cytoplasm. The enzyme catalyses uroporphyrinogen III + 4 H(+) = coproporphyrinogen III + 4 CO2. Its pathway is porphyrin-containing compound metabolism; protoporphyrin-IX biosynthesis; coproporphyrinogen-III from 5-aminolevulinate: step 4/4. Its function is as follows. Catalyzes the decarboxylation of four acetate groups of uroporphyrinogen-III to yield coproporphyrinogen-III. The sequence is that of Uroporphyrinogen decarboxylase from Ruegeria pomeroyi (strain ATCC 700808 / DSM 15171 / DSS-3) (Silicibacter pomeroyi).